A 399-amino-acid chain; its full sequence is Elongation factor Tu (399 aa).

A tr-type G domain is found at 10 to 209 (KPHVNIGTIG…EVDAYIPTPV (200 aa)). The interval 19-26 (GHVDHGKT) is G1. 19-26 (GHVDHGKT) is a binding site for GTP. Residue Thr26 participates in Mg(2+) binding. The G2 stretch occupies residues 60–64 (GITIA). The tract at residues 81 to 84 (DCPG) is G3. GTP is bound by residues 81-85 (DCPGH) and 136-139 (NKQD). The G4 stretch occupies residues 136 to 139 (NKQD). Residues 174–176 (SAL) are G5.

This sequence belongs to the TRAFAC class translation factor GTPase superfamily. Classic translation factor GTPase family. EF-Tu/EF-1A subfamily. In terms of assembly, monomer.

It is found in the cytoplasm. The enzyme catalyses GTP + H2O = GDP + phosphate + H(+). In terms of biological role, GTP hydrolase that promotes the GTP-dependent binding of aminoacyl-tRNA to the A-site of ribosomes during protein biosynthesis. This is Elongation factor Tu from Helicobacter acinonychis (strain Sheeba).